We begin with the raw amino-acid sequence, 405 residues long: Tryptophan synthase beta chain (405 aa).

Lys98 is modified (N6-(pyridoxal phosphate)lysine).

The protein belongs to the TrpB family. Tetramer of two alpha and two beta chains. It depends on pyridoxal 5'-phosphate as a cofactor.

The enzyme catalyses (1S,2R)-1-C-(indol-3-yl)glycerol 3-phosphate + L-serine = D-glyceraldehyde 3-phosphate + L-tryptophan + H2O. It participates in amino-acid biosynthesis; L-tryptophan biosynthesis; L-tryptophan from chorismate: step 5/5. In terms of biological role, the beta subunit is responsible for the synthesis of L-tryptophan from indole and L-serine. This is Tryptophan synthase beta chain from Stenotrophomonas maltophilia (strain K279a).